We begin with the raw amino-acid sequence, 438 residues long: Aspartate--tRNA(Asp/Asn) ligase (438 aa).

Position 176 (glutamate 176) interacts with L-aspartate. An aspartate region spans residues 198–201; the sequence is QLYK. Arginine 220 is an L-aspartate binding site. ATP-binding positions include 220-222, 228-230, and glutamate 361; these read RAE and RHL. The Mg(2+) site is built by glutamate 361 and serine 364. Residues serine 364 and arginine 368 each coordinate L-aspartate. Position 409–412 (409–412) interacts with ATP; that stretch reads GADR.

This sequence belongs to the class-II aminoacyl-tRNA synthetase family. Type 2 subfamily. Homodimer. Mg(2+) serves as cofactor.

It is found in the cytoplasm. It carries out the reaction tRNA(Asx) + L-aspartate + ATP = L-aspartyl-tRNA(Asx) + AMP + diphosphate. Aspartyl-tRNA synthetase with relaxed tRNA specificity since it is able to aspartylate not only its cognate tRNA(Asp) but also tRNA(Asn). Reaction proceeds in two steps: L-aspartate is first activated by ATP to form Asp-AMP and then transferred to the acceptor end of tRNA(Asp/Asn). This chain is Aspartate--tRNA(Asp/Asn) ligase, found in Methanococcus maripaludis (strain C6 / ATCC BAA-1332).